The following is a 199-amino-acid chain: MVLFSEDHIQETRRRGRIEVICGSMFSGKTEELIRRMKRAKFARQRVEIFKPAIDTRYSEGDVVSHDSNSISSTPIDSSASILLFTSEIDVVGIDEAQFFDSGLIDVCNQLANNGVRVIIAGLDMDFKGIPFGPMPALCAIADEVSKVHAICVKCGQLASFSHRTVKNDKQVLLGETAQYEPLCRECYQRALQEDREKS.

ATP is bound by residues 23 to 30 (GSMFSGKT) and 95 to 98 (DEAQ). Glu96 (proton acceptor) is an active-site residue. Zn(2+) contacts are provided by Cys152, Cys155, Cys184, and Cys187.

It belongs to the thymidine kinase family. As to quaternary structure, homotetramer.

It is found in the cytoplasm. It catalyses the reaction thymidine + ATP = dTMP + ADP + H(+). This is Thymidine kinase from Bacteroides fragilis (strain ATCC 25285 / DSM 2151 / CCUG 4856 / JCM 11019 / LMG 10263 / NCTC 9343 / Onslow / VPI 2553 / EN-2).